Consider the following 276-residue polypeptide: NH(3)-dependent NAD(+) synthetase (276 aa).

43-50 (GISGGVDS) serves as a coordination point for ATP. Asp-49 contacts Mg(2+). Arg-146 is a deamido-NAD(+) binding site. Residue Thr-166 coordinates ATP. Position 171 (Glu-171) interacts with Mg(2+). Residues Lys-179 and Asp-186 each coordinate deamido-NAD(+). Residues Lys-195 and Thr-217 each contribute to the ATP site. Residue 266-267 (HK) participates in deamido-NAD(+) binding.

Belongs to the NAD synthetase family. Homodimer.

The catalysed reaction is deamido-NAD(+) + NH4(+) + ATP = AMP + diphosphate + NAD(+) + H(+). Its pathway is cofactor biosynthesis; NAD(+) biosynthesis; NAD(+) from deamido-NAD(+) (ammonia route): step 1/1. In terms of biological role, catalyzes the ATP-dependent amidation of deamido-NAD to form NAD. Uses ammonia as a nitrogen source. This is NH(3)-dependent NAD(+) synthetase from Shewanella sediminis (strain HAW-EB3).